Reading from the N-terminus, the 78-residue chain is RNA-binding protein KhpA (78 aa).

One can recognise a KH domain in the interval 29 to 78 (TIIYELTVAKGDIGKIIGKEGRTIKAIRTLLVSVASRDNVKVSLEIMEER).

The protein belongs to the KhpA RNA-binding protein family.

The protein localises to the cytoplasm. In terms of biological role, a probable RNA-binding protein. In Chlamydia muridarum (strain MoPn / Nigg), this protein is RNA-binding protein KhpA.